The primary structure comprises 335 residues: Ferrochelatase (335 aa).

H194 and E275 together coordinate Fe cation.

This sequence belongs to the ferrochelatase family.

It is found in the cytoplasm. It catalyses the reaction heme b + 2 H(+) = protoporphyrin IX + Fe(2+). Its pathway is porphyrin-containing compound metabolism; protoheme biosynthesis; protoheme from protoporphyrin-IX: step 1/1. Its function is as follows. Catalyzes the ferrous insertion into protoporphyrin IX. The polypeptide is Ferrochelatase (Sodalis glossinidius (strain morsitans)).